Consider the following 831-residue polypeptide: V-type proton ATPase subunit a (831 aa).

Residues 1 to 418 lie on the Cytoplasmic side of the membrane; that stretch reads MSPSLFRSEE…DSYGIATYRE (418 aa). A helical membrane pass occupies residues 419-437; it reads VNHGIVAIVTFPFLFAIMF. The Vacuolar segment spans residues 438–439; it reads GD. The helical transmembrane segment at 440–456 threads the bilayer; the sequence is LGHGAIMASVALMFVLY. At 457–471 the chain is on the cytoplasmic side; the sequence is EKTLGAKKDLDEIVG. The helical transmembrane segment at 472-501 threads the bilayer; the sequence is MVFYGRYIVLLMGLFSMYVGFVYNDLFSKP. Over 502–548 the chain is Vacuolar; that stretch reads MSIFSSRWVWPVKSEEAIARAVQVGTYPIGIDPTWHSADNNLLFMNS. The chain crosses the membrane as a helical span at residues 549 to 568; that stretch reads YKMKLSIILGVIHMTFCLFL. Residues 569 to 586 are Cytoplasmic-facing; sequence SLSNYRFFKRKLDIYAVF. Residues 587–607 traverse the membrane as a helical segment; it reads VPSLIFLEAIFGYLVITIVYK. Topologically, residues 608 to 650 are vacuolar; sequence WCIDWKAKDLQPPSLLNMLILMFLSPGTLEDQLYPGQKYLQVG. A helical transmembrane segment spans residues 651–670; that stretch reads LVIAALICVPWLLIVKPFVL. The Cytoplasmic portion of the chain corresponds to 671 to 723; the sequence is WRRHSNEENKYQSLNSDLPNVDEADALMAVDSQEKQAEPFELGEVVIHQVIHT. Residues 724–748 form a helical membrane-spanning segment; that stretch reads IEFCLGCVSHTASYLRLWALSLAHN. At 749–769 the chain is on the vacuolar side; the sequence is QLSSVLWNMTLANGFRMTGIV. A helical transmembrane segment spans residues 770 to 808; the sequence is GSIFVVILFGFWFIATCVVLVAMEGTSAMLHSLRLHWVE. Topologically, residues 809–831 are cytoplasmic; the sequence is GMSKHFEGEGYAFTPFTFKVTAE.

Belongs to the V-ATPase 116 kDa subunit family. In terms of assembly, V-ATPase is a heteromultimeric enzyme composed of a peripheral catalytic V1 complex (components A to H) attached to an integral membrane V0 proton pore complex (components: a, c, c', c'', d, e, f and VOA1).

It is found in the vacuole membrane. In terms of biological role, subunit of the V0 complex of vacuolar(H+)-ATPase (V-ATPase), a multisubunit enzyme composed of a peripheral complex (V1) that hydrolyzes ATP and a membrane integral complex (V0) that translocates protons. V-ATPase is responsible for acidifying and maintaining the pH of intracellular compartments. The protein is V-type proton ATPase subunit a (vph1) of Schizosaccharomyces pombe (strain 972 / ATCC 24843) (Fission yeast).